Here is a 193-residue protein sequence, read N- to C-terminus: Bcl-2-binding component 3 (193 aa).

Disordered stretches follow at residues 1–31 (MARARQEGSSPEPVEGLARDSPRPFPLGRLM) and 71–131 (ALGG…VEEE). Position 10 is a phosphoserine (Ser-10). The BH3 motif lies at 137–151 (IGAQLRRMADDLNAQ).

This sequence belongs to the Bcl-2 family. Interacts with MCL1 and BCL2A1. Interacts with BCL2 and BCL2L1/BCL-XL. Interacts (via BH3 domain) with NOL3 (via CARD domain); this interaction prevents BBC3 association with BCL2 and results in CASP8 activation.

The protein localises to the mitochondrion. Functionally, essential mediator of p53/TP53-dependent and p53/TP53-independent apoptosis. Promotes partial unfolding of BCL2L1 and dissociation of BCL2L1 from p53/TP53, releasing the bound p53/TP53 to induce apoptosis. Regulates ER stress-induced neuronal apoptosis. The polypeptide is Bcl-2-binding component 3 (Bbc3) (Mus musculus (Mouse)).